We begin with the raw amino-acid sequence, 402 residues long: mRNA-capping enzyme subunit alpha (402 aa).

Lysine 66 functions as the N6-GMP-lysine intermediate in the catalytic mechanism.

It belongs to the eukaryotic GTase family. In terms of assembly, heterodimer. The mRNA-capping enzyme is composed of two separate chains alpha and beta, respectively a mRNA guanylyltransferase and an mRNA 5'-triphosphate monophosphatase.

Its subcellular location is the nucleus. The catalysed reaction is a 5'-end diphospho-ribonucleoside in mRNA + GTP + H(+) = a 5'-end (5'-triphosphoguanosine)-ribonucleoside in mRNA + diphosphate. Its function is as follows. Second step of mRNA capping. Transfer of the GMP moiety of GTP to the 5'-end of RNA via an enzyme-GMP covalent reaction intermediate. The chain is mRNA-capping enzyme subunit alpha (rnp-2) from Neurospora crassa (strain ATCC 24698 / 74-OR23-1A / CBS 708.71 / DSM 1257 / FGSC 987).